The chain runs to 846 residues: Major vault protein beta (846 aa).

Ala-2 is modified (N-acetylalanine). MVP repeat units follow at residues 2-60 (ATPV…IPPR), 61-115 (QYCI…QPVP), 116-172 (LQVI…EPVR), 173-225 (AVII…GFIQ), 226-280 (ALVL…RDIK), 281-332 (AITL…IQNV), 333-388 (NVLS…RRKR), 389-458 (IPLD…STKV), and 459-521 (ITYR…FLGP).

In terms of assembly, the vault ribonucleoprotein particle is a huge (400 A x 670 A) cage structure of 12.9 MDa. It consists of a dimer of half-vaults, with each half-vault comprising 39 identical major vault protein (MVP) chains. Dictyostelium is one of the few organisms in which the major component is actually two proteins (alpha and beta).

It is found in the cytoplasm. The protein resides in the nucleus. Its function is as follows. Unknown, though MVP-beta is required for normal vault structure. This is Major vault protein beta (mvpB) from Dictyostelium discoideum (Social amoeba).